The sequence spans 276 residues: Aldo-keto reductase Mjls_1919 (276 aa).

Tyrosine 50 functions as the Proton donor in the catalytic mechanism. NADPH-binding residues include leucine 190, isoleucine 228, lysine 230, serine 231, valine 232, arginine 236, serine 239, and asparagine 240.

The protein belongs to the aldo/keto reductase family.

This chain is Aldo-keto reductase Mjls_1919, found in Mycobacterium sp. (strain JLS).